Reading from the N-terminus, the 421-residue chain is Subtilisin-like protease 2 (421 aa).

The first 16 residues, 1–16 (MQLLNFGLLLLPFVAG), serve as a signal peptide directing secretion. A propeptide spanning residues 17-122 (DLAPQPEPLL…VHPDQHFYLA (106 aa)) is cleaved from the precursor. The Inhibitor I9 domain occupies 36–121 (QYLVTLKEGL…SVHPDQHFYL (86 aa)). One can recognise a Peptidase S8 domain in the interval 131–421 (RWGLGYMSSK…ERKCKLPKYY (291 aa)). Residue Asp-169 is the Charge relay system of the active site. Residue Asn-192 is glycosylated (N-linked (GlcNAc...) asparagine). His-201 serves as the catalytic Charge relay system. N-linked (GlcNAc...) asparagine glycosylation is found at Asn-248, Asn-261, and Asn-348. Ser-357 (charge relay system) is an active-site residue. Asn-388 carries an N-linked (GlcNAc...) asparagine glycan.

The protein belongs to the peptidase S8 family.

Its subcellular location is the secreted. Functionally, secreted subtilisin-like serine protease with keratinolytic activity that contributes to pathogenicity. This is Subtilisin-like protease 2 (SUB2) from Trichophyton rubrum (Athlete's foot fungus).